We begin with the raw amino-acid sequence, 512 residues long: Serine--tRNA ligase, cytoplasmic (512 aa).

Met1 is subject to N-acetylmethionine. The interval 9-61 (RVDKGGDPALIRETQEKRFKDPGLVDQLVKADSEWRRCRFRADNLNKLKNLCS) is interaction with tRNA. Ser241 is modified (phosphoserine). Thr271 and Arg302 together coordinate L-serine. ATP is bound by residues 302–304 (RQE) and 318–321 (VHQF). Residue Lys323 is modified to N6-acetyllysine. Residue Glu325 coordinates L-serine. 391 to 394 (ELVS) is a binding site for ATP. Asn427 is an L-serine binding site. The segment at 470 to 512 (FVKPAPIDQEPSKKQKKQHEGSKKKAKEVPLENQLQSMEVTEA) is disordered. Positions 479-499 (EPSKKQKKQHEGSKKKAKEVP) are enriched in basic and acidic residues. The Nuclear localization signal signature appears at 482-494 (KKQKKQHEGSKKK). Residues 502–512 (NQLQSMEVTEA) are compositionally biased toward polar residues. Position 506 is a phosphoserine (Ser506).

This sequence belongs to the class-II aminoacyl-tRNA synthetase family. Type-1 seryl-tRNA synthetase subfamily. In terms of assembly, homodimer. The tRNA molecule may bind across the dimer. Interacts with SIRT2. Interacts with METTL6; interaction is required for the tRNA N(3)-methylcytidine methyltransferase activity of METTL6.

It localises to the cytoplasm. Its subcellular location is the nucleus. It carries out the reaction tRNA(Ser) + L-serine + ATP = L-seryl-tRNA(Ser) + AMP + diphosphate + H(+). The catalysed reaction is tRNA(Sec) + L-serine + ATP = L-seryl-tRNA(Sec) + AMP + diphosphate + H(+). Its pathway is aminoacyl-tRNA biosynthesis; selenocysteinyl-tRNA(Sec) biosynthesis; L-seryl-tRNA(Sec) from L-serine and tRNA(Sec): step 1/1. Functionally, catalyzes the attachment of serine to tRNA(Ser) in a two-step reaction: serine is first activated by ATP to form Ser-AMP and then transferred to the acceptor end of tRNA(Ser). Is probably also able to aminoacylate tRNA(Sec) with serine, to form the misacylated tRNA L-seryl-tRNA(Sec), which will be further converted into selenocysteinyl-tRNA(Sec). In the nucleus, binds to the VEGFA core promoter and prevents MYC binding and transcriptional activation by MYC. Recruits SIRT2 to the VEGFA promoter, promoting deacetylation of histone H4 at 'Lys-16' (H4K16). Thereby, inhibits the production of VEGFA and sprouting angiogenesis mediated by VEGFA. This Mus musculus (Mouse) protein is Serine--tRNA ligase, cytoplasmic (Sars1).